A 343-amino-acid polypeptide reads, in one-letter code: MGNLPSAAKHCLNYQQLLREHLWSGDSVAGALDAAQEASQLPGLPEYVKIVEVGPRDGLQNEKVIVPTDIKIELINQLSQTGLSVIEVTSFVSSRWVPQMADHAEVMRGIRQYPGVRYPVLTPNLQGFQHAVAAGATEIAVFGAASESFSKKNINCSIEESMGRFQEVISSARHMDIPVRGYVSCALGCPYEGSITPQKVTEVSKRLYGMGCYEISLGDTIGVGTPGSMKMMLESVMKEIPPGALAVHCHDTYGQALANILTALQMGINVVDSAVSGLGGCPYAKGASGNVATEDLIYMLNGMGLNTGVDLYKVMEAGEFICKAVNKTTNSKVAQASFNARLE.

Gly-2 is lipidated: N-myristoyl glycine. In terms of domain architecture, Pyruvate carboxyltransferase spans 48 to 315; it reads VKIVEVGPRD…NTGVDLYKVM (268 aa). Arg-56 lines the substrate pocket. The a divalent metal cation site is built by Asp-57, His-248, and His-250. Residue Cys-281 is part of the active site. Asn-290 serves as a coordination point for a divalent metal cation.

Belongs to the HMG-CoA lyase family. Requires a divalent metal cation as cofactor.

The protein resides in the cytoplasm. Its subcellular location is the cytosol. It is found in the endoplasmic reticulum membrane. The enzyme catalyses (3S)-3-hydroxy-3-methylglutaryl-CoA = acetoacetate + acetyl-CoA. Its pathway is metabolic intermediate metabolism; (S)-3-hydroxy-3-methylglutaryl-CoA degradation; acetoacetate from (S)-3-hydroxy-3-methylglutaryl-CoA: step 1/1. Functionally, non-mitochondrial 3-hydroxy-3-methylglutaryl-CoA lyase that catalyzes a cation-dependent cleavage of (S)-3-hydroxy-3-methylglutaryl-CoA into acetyl-CoA and acetoacetate, a key step in ketogenesis, the products of which support energy production in nonhepatic animal tissues. The sequence is that of 3-hydroxy-3-methylglutaryl-CoA lyase, cytoplasmic (Hmgcll1) from Mus musculus (Mouse).